A 403-amino-acid chain; its full sequence is Betaine--homocysteine S-methyltransferase 1 (403 aa).

One can recognise a Hcy-binding domain in the interval 8–311 (KGLLERLDAG…YHTRAIAEEL (304 aa)). Residues Cys-214, Cys-296, and Cys-297 each contribute to the Zn(2+) site.

As to quaternary structure, homotetramer. The cofactor is Zn(2+).

It localises to the cytoplasm. The enzyme catalyses L-homocysteine + glycine betaine = N,N-dimethylglycine + L-methionine. It functions in the pathway amine and polyamine degradation; betaine degradation; sarcosine from betaine: step 1/2. The protein operates within amino-acid biosynthesis; L-methionine biosynthesis via de novo pathway; L-methionine from L-homocysteine (BhmT route): step 1/1. Its function is as follows. Involved in the regulation of homocysteine metabolism. Converts betaine and homocysteine to dimethylglycine and methionine, respectively. This reaction is also required for the irreversible oxidation of choline. The chain is Betaine--homocysteine S-methyltransferase 1 (bhmt) from Xenopus laevis (African clawed frog).